Consider the following 137-residue polypeptide: Large ribosomal subunit protein uL13 (137 aa).

It belongs to the universal ribosomal protein uL13 family. As to quaternary structure, part of the 50S ribosomal subunit.

In terms of biological role, this protein is one of the early assembly proteins of the 50S ribosomal subunit, although it is not seen to bind rRNA by itself. It is important during the early stages of 50S assembly. The protein is Large ribosomal subunit protein uL13 of Methanocaldococcus jannaschii (strain ATCC 43067 / DSM 2661 / JAL-1 / JCM 10045 / NBRC 100440) (Methanococcus jannaschii).